The primary structure comprises 550 residues: Tyrosine-protein phosphatase 1 (550 aa).

One can recognise a Tyrosine-protein phosphatase domain in the interval 260 to 539 (LYQKFLRLQS…KYVYDLIDSL (280 aa)). A phosphoserine mark is found at Ser-318 and Ser-320. Catalysis depends on Cys-470, which acts as the Phosphocysteine intermediate.

This sequence belongs to the protein-tyrosine phosphatase family. Non-receptor class subfamily.

It is found in the cytoplasm. The enzyme catalyses O-phospho-L-tyrosyl-[protein] + H2O = L-tyrosyl-[protein] + phosphate. In terms of biological role, plays a role in inhibiting the onset of mitosis. Dephosphorylates sty1/spc1 and wis1/spc2/sty2. The protein is Tyrosine-protein phosphatase 1 (pyp1) of Schizosaccharomyces pombe (strain 972 / ATCC 24843) (Fission yeast).